The sequence spans 347 residues: UDP-3-O-acylglucosamine N-acyltransferase (347 aa).

His-248 functions as the Proton acceptor in the catalytic mechanism.

Belongs to the transferase hexapeptide repeat family. LpxD subfamily. Homotrimer.

The catalysed reaction is a UDP-3-O-[(3R)-3-hydroxyacyl]-alpha-D-glucosamine + a (3R)-hydroxyacyl-[ACP] = a UDP-2-N,3-O-bis[(3R)-3-hydroxyacyl]-alpha-D-glucosamine + holo-[ACP] + H(+). It participates in bacterial outer membrane biogenesis; LPS lipid A biosynthesis. In terms of biological role, catalyzes the N-acylation of UDP-3-O-acylglucosamine using 3-hydroxyacyl-ACP as the acyl donor. Is involved in the biosynthesis of lipid A, a phosphorylated glycolipid that anchors the lipopolysaccharide to the outer membrane of the cell. The protein is UDP-3-O-acylglucosamine N-acyltransferase of Parasynechococcus marenigrum (strain WH8102).